Consider the following 487-residue polypeptide: Protein nucleotidyltransferase YdiU (487 aa).

Residues glycine 90, glycine 92, arginine 93, lysine 113, aspartate 125, glycine 126, arginine 176, and arginine 183 each coordinate ATP. The Proton acceptor role is filled by aspartate 252. Residues asparagine 253 and aspartate 262 each coordinate Mg(2+). Position 262 (aspartate 262) interacts with ATP.

Belongs to the SELO family. Mg(2+) is required as a cofactor. Requires Mn(2+) as cofactor.

It carries out the reaction L-seryl-[protein] + ATP = 3-O-(5'-adenylyl)-L-seryl-[protein] + diphosphate. It catalyses the reaction L-threonyl-[protein] + ATP = 3-O-(5'-adenylyl)-L-threonyl-[protein] + diphosphate. The catalysed reaction is L-tyrosyl-[protein] + ATP = O-(5'-adenylyl)-L-tyrosyl-[protein] + diphosphate. The enzyme catalyses L-histidyl-[protein] + UTP = N(tele)-(5'-uridylyl)-L-histidyl-[protein] + diphosphate. It carries out the reaction L-seryl-[protein] + UTP = O-(5'-uridylyl)-L-seryl-[protein] + diphosphate. It catalyses the reaction L-tyrosyl-[protein] + UTP = O-(5'-uridylyl)-L-tyrosyl-[protein] + diphosphate. Nucleotidyltransferase involved in the post-translational modification of proteins. It can catalyze the addition of adenosine monophosphate (AMP) or uridine monophosphate (UMP) to a protein, resulting in modifications known as AMPylation and UMPylation. This is Protein nucleotidyltransferase YdiU from Pseudomonas fluorescens (strain ATCC BAA-477 / NRRL B-23932 / Pf-5).